Reading from the N-terminus, the 263-residue chain is Zinc finger protein STAMENLESS 1 (263 aa).

Positions 1–51 are disordered; sequence MNSSRRQEGSPLDLNNLPDEFGKQTVESSTTTAASSAEASRVTKKKSNGGK. Low complexity predominate over residues 25–40; the sequence is TVESSTTTAASSAEAS. Residues 58–80 form a C2H2-type zinc finger; it reads YECRFCSLKFCKSQALGGHMNRH.

Expressed in leaf primordia, inflorescence meristem, rachis branch meristems, floral meristem and floral organ primordia.

Its subcellular location is the nucleus. Functionally, regulates floral organ identity and cell proliferation in the inner floral whorls. Probably specifies the identities of lodicule and stamen through positive regulation of MADS16 expression. May contribute to morphogenesis by suppressing OSH1 expression in the lateral organs. The protein is Zinc finger protein STAMENLESS 1 (SL1) of Oryza sativa subsp. japonica (Rice).